Reading from the N-terminus, the 820-residue chain is Probable ATP-dependent RNA helicase DDX23 (820 aa).

A compositionally biased stretch (basic and acidic residues) spans 1 to 42; that stretch reads MAGELADKKDRDASPSKEERKRSRTPDRERDRDRDRKSSPSK. Residues 1 to 244 are disordered; sequence MAGELADKKD…QKIREEKDKS (244 aa). Serine 14 and serine 16 each carry phosphoserine. Basic residues predominate over residues 43–65; that stretch reads DRKRHRSRDRRRGGSRSRSRSRS. Residues 66–105 show a composition bias toward basic and acidic residues; that stretch reads KSAERERRHKERERDKERDRNKKDRDRDKDGHRRDKDRKR. A phosphoserine mark is found at serine 107 and serine 109. Composition is skewed to basic and acidic residues over residues 112-137, 147-226, and 233-244; these read RGKDFKSRKDRDSKKDEEDEHGDKKP, LLAK…RETN, and GRQKIREEKDKS. Positions 391–419 match the Q motif motif; the sequence is RSWKDSSLPPHILEVIDKCGYKEPTPIQR. The 206-residue stretch at 422–627 folds into the Helicase ATP-binding domain; the sequence is IPIGLQNRDI…RSYLRRPAVV (206 aa). ATP is bound at residue 435–442; the sequence is AETGSGKT. The short motif at 549 to 552 is the DEAD box element; sequence DEAD. Residues 651-799 enclose the Helicase C-terminal domain; the sequence is KRKKLLAILE…SCPPELANHP (149 aa). Glycyl lysine isopeptide (Lys-Gly) (interchain with G-Cter in SUMO2) cross-links involve residues lysine 686 and lysine 811.

The protein belongs to the DEAD box helicase family. DDX23/PRP28 subfamily. As to quaternary structure, the phosphorylated form (by SRPK2) is a component of the U4/U6-U5 tri-snRNP complex composed of the U4, U6 and U5 snRNAs and at least PRPF3, PRPF4, PRPF6, PRPF8, PRPF31, SNRNP200, TXNL4A, WDR57, SNRNP40, DDX23, CD2BP2, PPIH, SNU13, EFTUD2, SART1 and USP39. Identified in the spliceosome C complex. Interacts with ERBB4. Interacts with ERCC6. Post-translationally, in vitro phosphorylated by CLK1 and U1 snRNP-associated protein kinase. Phosphorylated by SRPK2 and this phosphorylation is required for its association with the tri-snRNP (U4/U6-U5 tri-small nuclear ribonucleoproteins) and subsequent spliceosomal B complex formation. May be phosphorylated by SRPK2 on Ser residues in the SR domain; the phosphorylation is required for the removal of inappropriate R-loops during transcription.

The protein localises to the nucleus. The protein resides in the chromosome. The enzyme catalyses ATP + H2O = ADP + phosphate + H(+). Its function is as follows. Involved in pre-mRNA splicing and its phosphorylated form (by SRPK2) is required for spliceosomal B complex formation. Independently of its spliceosome formation function, required for the suppression of incorrect R-loops formed during transcription; R-loops are composed of a DNA:RNA hybrid and the associated non-template single-stranded DNA. The polypeptide is Probable ATP-dependent RNA helicase DDX23 (Pongo abelii (Sumatran orangutan)).